The chain runs to 60 residues: Large ribosomal subunit protein bL32 (60 aa).

Basic residues predominate over residues 1-19 (MGVPKRKTSKGRRDKRRAH). The tract at residues 1–20 (MGVPKRKTSKGRRDKRRAHL) is disordered.

This sequence belongs to the bacterial ribosomal protein bL32 family.

The protein is Large ribosomal subunit protein bL32 of Syntrophobacter fumaroxidans (strain DSM 10017 / MPOB).